Reading from the N-terminus, the 440-residue chain is Ribosomal protein uS12 methylthiotransferase RimO (440 aa).

In terms of domain architecture, MTTase N-terminal spans Pro-7 to Pro-117. The [4Fe-4S] cluster site is built by Cys-16, Cys-52, Cys-81, Cys-148, Cys-152, and Cys-155. The Radical SAM core domain occupies Leu-134–Gln-370. The TRAM domain occupies Lys-373–Gly-439.

It belongs to the methylthiotransferase family. RimO subfamily. [4Fe-4S] cluster serves as cofactor.

The protein localises to the cytoplasm. It catalyses the reaction L-aspartate(89)-[ribosomal protein uS12]-hydrogen + (sulfur carrier)-SH + AH2 + 2 S-adenosyl-L-methionine = 3-methylsulfanyl-L-aspartate(89)-[ribosomal protein uS12]-hydrogen + (sulfur carrier)-H + 5'-deoxyadenosine + L-methionine + A + S-adenosyl-L-homocysteine + 2 H(+). Its function is as follows. Catalyzes the methylthiolation of an aspartic acid residue of ribosomal protein uS12. This chain is Ribosomal protein uS12 methylthiotransferase RimO, found in Afipia carboxidovorans (strain ATCC 49405 / DSM 1227 / KCTC 32145 / OM5) (Oligotropha carboxidovorans).